Here is a 783-residue protein sequence, read N- to C-terminus: Glucosidase YgjK (783 aa).

The first 22 residues, 1–22, serve as a signal peptide directing secretion; it reads MKIKTILTPVTCALLISFSAHA. The tract at residues 24–254 is N-terminal domain; sequence NADNYKNVIN…TTLYTTYSHL (231 aa). The tract at residues 254–299 is linker; that stretch reads LLTAQEVSKEQMQIRDILARPAFYLTASQQRWEEYLKKGLTNPDAT. The interval 300–783 is a domain; the sequence is PEQTRVAVKA…MLYNDFFRKQ (484 aa). 5 residues coordinate Ca(2+): Asp-454, Asn-456, Asn-458, Val-460, and Glu-462. The active-site Proton donor is the Asp-524. A Ca(2+)-binding site is contributed by Glu-572. Glu-750 serves as the catalytic Proton acceptor.

This sequence belongs to the glycosyl hydrolase 63 family.

Its function is as follows. Glucoside hydrolase that cleaves the alpha-1,3-glucosidic linkage in nigerose. Has very low activity towards maltooligosaccharides, soluble starch, nigerotriose, kojibiose and trehalose. In Escherichia coli (strain K12), this protein is Glucosidase YgjK (ygjK).